A 165-amino-acid chain; its full sequence is 3-hydroxyacyl-[acyl-carrier-protein] dehydratase FabZ (165 aa).

Residue His-68 is part of the active site.

It belongs to the thioester dehydratase family. FabZ subfamily.

It is found in the cytoplasm. It catalyses the reaction a (3R)-hydroxyacyl-[ACP] = a (2E)-enoyl-[ACP] + H2O. Its function is as follows. Involved in unsaturated fatty acids biosynthesis. Catalyzes the dehydration of short chain beta-hydroxyacyl-ACPs and long chain saturated and unsaturated beta-hydroxyacyl-ACPs. This Methylobacterium sp. (strain 4-46) protein is 3-hydroxyacyl-[acyl-carrier-protein] dehydratase FabZ.